A 663-amino-acid polypeptide reads, in one-letter code: Probable methylenetetrahydrofolate reductase (NADPH) (663 aa).

Residue Glu-76 is the Proton donor/acceptor of the active site. NAD(+)-binding positions include 76 to 81 (EFFPPR) and 107 to 108 (TW). The residue at position 107 (Thr-107) is a Phosphothreonine. FAD is bound by residues 107–108 (TW), His-141, 171–173 (RGD), 187–188 (RA), Tyr-210, 214–217 (HPQA), Asp-223, and Lys-230. Asp-173 provides a ligand contact to substrate. Residues Gln-241, Tyr-334, and Arg-338 each contribute to the substrate site. Residue Ser-408 is modified to Phosphoserine. Phosphothreonine is present on Thr-465. Residues 477 to 480 (QPET), 497 to 501 (TVNSQ), Thr-578, and Thr-591 each bind S-adenosyl-L-methionine.

It belongs to the methylenetetrahydrofolate reductase family. FAD is required as a cofactor.

The catalysed reaction is (6S)-5-methyl-5,6,7,8-tetrahydrofolate + NADP(+) = (6R)-5,10-methylene-5,6,7,8-tetrahydrofolate + NADPH + H(+). The protein operates within one-carbon metabolism; tetrahydrofolate interconversion. In Caenorhabditis elegans, this protein is Probable methylenetetrahydrofolate reductase (NADPH).